The primary structure comprises 246 residues: Bis(5'-nucleosyl)-tetraphosphatase PrpE [asymmetrical] (246 aa).

The protein belongs to the PrpE family. The cofactor is Ni(2+).

It catalyses the reaction P(1),P(4)-bis(5'-guanosyl) tetraphosphate + H2O = GMP + GTP + 2 H(+). In terms of biological role, asymmetrically hydrolyzes Ap4p to yield AMP and ATP. The protein is Bis(5'-nucleosyl)-tetraphosphatase PrpE [asymmetrical] of Bacillus thuringiensis subsp. konkukian (strain 97-27).